A 485-amino-acid polypeptide reads, in one-letter code: Hexokinase (485 aa).

Serine 15 carries the phosphoserine modification. One can recognise a Hexokinase domain in the interval 21 to 468 (ANLMEQIHGL…SGVGAAIIAC (448 aa)). A hexokinase small subdomain region spans residues 75–208 (TGKETGDFLA…NIPINVVALI (134 aa)). Residue lysine 111 participates in ATP binding. Residues 151–177 (PLGFTFSYPASQKKINSGVLQRWTKGF) form a glucose-binding region. The hexokinase large subdomain stretch occupies residues 209–457 (NDTTGTLVAS…HPIQLVAAED (249 aa)).

Monomer and homodimer. The monomeric form is active, the homodimeric form inactive.

It carries out the reaction a D-hexose + ATP = a D-hexose 6-phosphate + ADP + H(+). The catalysed reaction is D-fructose + ATP = D-fructose 6-phosphate + ADP + H(+). It catalyses the reaction D-glucose + ATP = D-glucose 6-phosphate + ADP + H(+). It participates in carbohydrate metabolism; hexose metabolism. Its pathway is carbohydrate degradation; glycolysis; D-glyceraldehyde 3-phosphate and glycerone phosphate from D-glucose: step 1/4. In terms of biological role, catalyzes the phosphorylation of hexose, such as D-glucose and D-fructose, to hexose 6-phosphate (D-glucose 6-phosphate and D-fructose 6-phosphate, respectively). Has higher affinity for D-glucose. Mediates the initial step of glycolysis by catalyzing phosphorylation of D-glucose to D-glucose 6-phosphate. The sequence is that of Hexokinase (RAG5) from Kluyveromyces lactis (strain ATCC 8585 / CBS 2359 / DSM 70799 / NBRC 1267 / NRRL Y-1140 / WM37) (Yeast).